Here is a 229-residue protein sequence, read N- to C-terminus: MNNSAFFRLQQLISPSLPIGAFTYSQGMEWAVECGWIKNADDLHCWLESLLQSSVQTLELPVLARLYHASCHQDREAFTHWAHTLLAWRETRELRMEECQRGHALTMVLDRLPDAANWPELQQPEWRDALAQTQLAGFALASARWGIELQQALNGYLWSWLENMVIVAVKLIPLGQSDGQRELYRFSDQLAAITQHALAMDDDDIGSSSPAMAIASCLHETQYCRLFRS.

Belongs to the UreF family. UreD, UreF and UreG form a complex that acts as a GTP-hydrolysis-dependent molecular chaperone, activating the urease apoprotein by helping to assemble the nickel containing metallocenter of UreC. The UreE protein probably delivers the nickel.

Its subcellular location is the cytoplasm. Functionally, required for maturation of urease via the functional incorporation of the urease nickel metallocenter. The protein is Urease accessory protein UreF of Alcanivorax borkumensis (strain ATCC 700651 / DSM 11573 / NCIMB 13689 / SK2).